Reading from the N-terminus, the 213-residue chain is MKPFTELNGRVAPLDRANVDTDAIIPKQFLKSIKRSGFGPNLFDEWRYTDHGEPGQDCVNRPKNPDFVLNQPRYEGAQILLTRDNFGCGSSREHAPWALEDYGFRVLIGSSFADIFFNNCFKNGLLPIVLPAPEIDELFRQCEATDGYRLKVDLATQTIVRPDGKTIAFEVDPFRKECLLNGWDDIGLTLRHADRIRTFEEKRRADHPYYFVA.

The protein belongs to the LeuD family. LeuD type 1 subfamily. In terms of assembly, heterodimer of LeuC and LeuD.

It catalyses the reaction (2R,3S)-3-isopropylmalate = (2S)-2-isopropylmalate. The protein operates within amino-acid biosynthesis; L-leucine biosynthesis; L-leucine from 3-methyl-2-oxobutanoate: step 2/4. Its function is as follows. Catalyzes the isomerization between 2-isopropylmalate and 3-isopropylmalate, via the formation of 2-isopropylmaleate. The polypeptide is 3-isopropylmalate dehydratase small subunit (Aromatoleum aromaticum (strain DSM 19018 / LMG 30748 / EbN1) (Azoarcus sp. (strain EbN1))).